The following is a 193-amino-acid chain: Outer-membrane lipoprotein LolB (193 aa).

A signal peptide spans 1 to 21 (MRPARRFLAALACVAGALLSA). Cysteine 22 is lipidated: N-palmitoyl cysteine. The S-diacylglycerol cysteine moiety is linked to residue cysteine 22.

This sequence belongs to the LolB family. In terms of assembly, monomer.

The protein resides in the cell outer membrane. Functionally, plays a critical role in the incorporation of lipoproteins in the outer membrane after they are released by the LolA protein. The protein is Outer-membrane lipoprotein LolB of Azoarcus sp. (strain BH72).